Consider the following 204-residue polypeptide: N-(5'-phosphoribosyl)anthranilate isomerase (204 aa).

The protein belongs to the TrpF family.

It carries out the reaction N-(5-phospho-beta-D-ribosyl)anthranilate = 1-(2-carboxyphenylamino)-1-deoxy-D-ribulose 5-phosphate. Its pathway is amino-acid biosynthesis; L-tryptophan biosynthesis; L-tryptophan from chorismate: step 3/5. This chain is N-(5'-phosphoribosyl)anthranilate isomerase, found in Bacillus cereus (strain AH820).